We begin with the raw amino-acid sequence, 297 residues long: Syntaxin-4 (297 aa).

Basic and acidic residues predominate over residues 1–12 (MRDRTHELRQGD). A disordered region spans residues 1 to 21 (MRDRTHELRQGDDSSDDEDKE). Residues 1–275 (MRDRTHELRQ…QKKARKKKVF (275 aa)) are Cytoplasmic-facing. Ser14 and Ser15 each carry phosphoserine. A Phosphothreonine modification is found at Thr31. 4 positions are modified to phosphoserine: Ser36, Ser117, Ser208, and Ser248. A coiled-coil region spans residues 43-163 (QKVRTIRQTI…ERIRRQLKIT (121 aa)). Residues 200–262 (LNEISARHSE…ERGQEHVKVA (63 aa)) enclose the t-SNARE coiled-coil homology domain. The helical; Anchor for type IV membrane protein transmembrane segment at 276 to 296 (IAICLSITVLILVVIIVISTL) threads the bilayer. Position 297 (Val297) is a topological domain, extracellular.

This sequence belongs to the syntaxin family. Component of the SNARE complex composed of STX4, SNAP23 and VAMP7 that interacts with SYT7 during lysosomal exocytosis. Found in a complex with VAMP8 and SNAP23. Detected in a complex with SNAP23 and STXBP4. Interacts with VAMP2. Interacts with SNAP23 and SNAPIN. Interacts with LLGL1. Interacts (via C-terminus) with CENPF. Interacts with DOC2B. Interacts with STXBP6. Interacts with STXBP3; excludes interaction with DOC2B and SNAP25. Interacts with STXBP4; excludes interaction with VAMP2. Interacts with STXBP5L.

It is found in the cell membrane. The protein resides in the cell projection. The protein localises to the neuron projection. It localises to the stereocilium. Plasma membrane t-SNARE that mediates docking of transport vesicles. Necessary for the translocation of SLC2A4 from intracellular vesicles to the plasma membrane. In neurons, recruited at neurite tips to membrane domains rich in the phospholipid 1-oleoyl-2-palmitoyl-PC (OPPC) which promotes neurite tip surface expression of the dopamine transporter SLC6A3/DAT by facilitating fusion of SLC6A3-containing transport vesicles with the plasma membrane. Together with STXB3 and VAMP2, may also play a role in docking/fusion of intracellular GLUT4-containing vesicles with the cell surface in adipocytes and in docking of synaptic vesicles at presynaptic active zones. Required for normal hearing. This is Syntaxin-4 (STX4) from Bos taurus (Bovine).